A 296-amino-acid polypeptide reads, in one-letter code: 4-hydroxy-tetrahydrodipicolinate synthase (296 aa).

Thr-49 provides a ligand contact to pyruvate. Residue Tyr-137 is the Proton donor/acceptor of the active site. The active-site Schiff-base intermediate with substrate is Lys-165. A pyruvate-binding site is contributed by Ile-207.

The protein belongs to the DapA family. Homotetramer; dimer of dimers.

It localises to the cytoplasm. It catalyses the reaction L-aspartate 4-semialdehyde + pyruvate = (2S,4S)-4-hydroxy-2,3,4,5-tetrahydrodipicolinate + H2O + H(+). It participates in amino-acid biosynthesis; L-lysine biosynthesis via DAP pathway; (S)-tetrahydrodipicolinate from L-aspartate: step 3/4. Catalyzes the condensation of (S)-aspartate-beta-semialdehyde [(S)-ASA] and pyruvate to 4-hydroxy-tetrahydrodipicolinate (HTPA). This is 4-hydroxy-tetrahydrodipicolinate synthase from Rhodopseudomonas palustris (strain BisA53).